Reading from the N-terminus, the 323-residue chain is Transcription factor MafB (323 aa).

K32 is covalently cross-linked (Glycyl lysine isopeptide (Lys-Gly) (interchain with G-Cter in SUMO)). Positions 34-43 (EPLGRAERPG) are enriched in basic and acidic residues. Disordered regions lie at residues 34-78 (EPLG…PTEP) and 116-210 (PVPQ…VEDR). The span at 54 to 77 (SVSSTPLSTPCSSVPSSPSFSPTE) shows a compositional bias: low complexity. Composition is skewed to basic residues over residues 129–143 (SAHH…HPHH) and 159–168 (AHPHHHHHHQ). Low complexity predominate over residues 192 to 201 (PHATAAATAA). The interval 238–263 (RLKQKRRTLKNRGYAQSCRYKRVQQK) is basic motif. The region spanning 238–301 (RLKQKRRTLK…DAYKVKCEKL (64 aa)) is the bZIP domain. The leucine-zipper stretch occupies residues 266 to 287 (LENEKTQLIQQVEQLKQEVSRL). Residue K297 forms a Glycyl lysine isopeptide (Lys-Gly) (interchain with G-Cter in SUMO) linkage.

It belongs to the bZIP family. Maf subfamily. In terms of assembly, homodimer or heterodimer with other bHLH-Zip transcription factors. Forms homodimers and heterodimers with FOS, FOSB and FOSL2, but not with JUN proteins (JUN, JUNB and JUND). Interacts with the intracellular cytoplasmic domain of LRP1 (LRPICD); the interaction results in a moderate reduction of MAFB transcriptional potential. Binds DNA as a homodimer or a heterodimer. Interacts with PAX6; the interaction is direct. Interacts with ETS1 and LRP1. Sumoylated. Sumoylation on Lys-32 and Lys-297 stimulates its transcriptional repression activity and promotes macrophage differentiation from myeloid progenitors. In terms of tissue distribution, expressed in pancreatic alpha-cells (glucagon-positive cells), in podocytes of the kidney and macrophages (at protein level). Most abundant in kidney, gut, lung and brain.

It is found in the nucleus. Acts as a transcriptional activator or repressor. Plays a pivotal role in regulating lineage-specific hematopoiesis by repressing ETS1-mediated transcription of erythroid-specific genes in myeloid cells. Required for monocytic, macrophage, osteoclast, podocyte and islet beta cell differentiation. Involved in renal tubule survival and F4/80 maturation. Activates the insulin and glucagon promoters. Together with PAX6, transactivates weakly the glucagon gene promoter through the G1 element. SUMO modification controls its transcriptional activity and ability to specify macrophage fate. Binds element G1 on the glucagon promoter. Involved either as an oncogene or as a tumor suppressor, depending on the cell context. Required for the transcriptional activation of HOXB3 in the rhombomere r5 in the hindbrain. In Mus musculus (Mouse), this protein is Transcription factor MafB (Mafb).